The primary structure comprises 206 residues: dCTP deaminase, dUMP-forming (206 aa).

Residues 117–122 (RSSFGR), aspartate 135, 143–145 (TLE), glutamine 163, tyrosine 177, lysine 184, and glutamine 188 contribute to the dCTP site. Glutamate 145 acts as the Proton donor/acceptor in catalysis.

The protein belongs to the dCTP deaminase family. Homotrimer.

It carries out the reaction dCTP + 2 H2O = dUMP + NH4(+) + diphosphate. It functions in the pathway pyrimidine metabolism; dUMP biosynthesis; dUMP from dCTP: step 1/1. Functionally, bifunctional enzyme that catalyzes both the deamination of dCTP to dUTP and the hydrolysis of dUTP to dUMP without releasing the toxic dUTP intermediate. The sequence is that of dCTP deaminase, dUMP-forming from Methanococcus maripaludis (strain C6 / ATCC BAA-1332).